A 388-amino-acid polypeptide reads, in one-letter code: 3-sulfinopropanoyl-CoA desulfinase (388 aa).

Residues 121 to 124, S130, and 153 to 156 each bind FAD; these read ICIT and HWIT. Residue 240–241 coordinates substrate; that stretch reads YN. Residues R269, Q336, 363–367, and Q384 each bind FAD; that span reads GGTAQ.

It belongs to the acyl-CoA dehydrogenase family. In terms of assembly, homotrimer or homotetramer. FAD serves as cofactor.

The catalysed reaction is 3-sulfinopropanoyl-CoA + H2O = propanoyl-CoA + sulfite + H(+). In terms of biological role, catalyzes the conversion 3-sulfinopropanoyl-CoA (3SP-CoA) to propanoyl-CoA by abstraction of sulfite. Does not show dehydrogenase activity. This is 3-sulfinopropanoyl-CoA desulfinase from Paraburkholderia xenovorans (strain LB400).